A 118-amino-acid chain; its full sequence is Large ribosomal subunit protein bL20 (118 aa).

It belongs to the bacterial ribosomal protein bL20 family.

Its function is as follows. Binds directly to 23S ribosomal RNA and is necessary for the in vitro assembly process of the 50S ribosomal subunit. It is not involved in the protein synthesizing functions of that subunit. The sequence is that of Large ribosomal subunit protein bL20 from Shigella dysenteriae serotype 1 (strain Sd197).